The sequence spans 87 residues: Small ribosomal subunit protein bS20 (87 aa).

Residues Met1–Asn21 form a disordered region. Residues Gln7–Lys20 are compositionally biased toward basic residues.

It belongs to the bacterial ribosomal protein bS20 family.

Functionally, binds directly to 16S ribosomal RNA. In Phytoplasma mali (strain AT), this protein is Small ribosomal subunit protein bS20.